We begin with the raw amino-acid sequence, 453 residues long: Phosphoglucosamine mutase (453 aa).

Catalysis depends on Ser100, which acts as the Phosphoserine intermediate. Positions 100, 239, 241, and 243 each coordinate Mg(2+). A Phosphoserine modification is found at Ser100.

This sequence belongs to the phosphohexose mutase family. Mg(2+) serves as cofactor. Post-translationally, activated by phosphorylation.

It carries out the reaction alpha-D-glucosamine 1-phosphate = D-glucosamine 6-phosphate. In terms of biological role, catalyzes the conversion of glucosamine-6-phosphate to glucosamine-1-phosphate. This is Phosphoglucosamine mutase from Buchnera aphidicola subsp. Baizongia pistaciae (strain Bp).